A 628-amino-acid polypeptide reads, in one-letter code: tRNA uridine 5-carboxymethylaminomethyl modification enzyme MnmG (628 aa).

Residues 11–16 (GAGHAG), Val-123, and Ser-178 contribute to the FAD site. 271-285 (GPRYCPSIETKIVTF) contributes to the NAD(+) binding site. An FAD-binding site is contributed by Gln-368.

This sequence belongs to the MnmG family. As to quaternary structure, homodimer. Heterotetramer of two MnmE and two MnmG subunits. The cofactor is FAD.

It localises to the cytoplasm. Functionally, NAD-binding protein involved in the addition of a carboxymethylaminomethyl (cmnm) group at the wobble position (U34) of certain tRNAs, forming tRNA-cmnm(5)s(2)U34. In Bacteroides thetaiotaomicron (strain ATCC 29148 / DSM 2079 / JCM 5827 / CCUG 10774 / NCTC 10582 / VPI-5482 / E50), this protein is tRNA uridine 5-carboxymethylaminomethyl modification enzyme MnmG.